A 400-amino-acid polypeptide reads, in one-letter code: CCA-adding enzyme (400 aa).

Residues Gly28 and Arg31 each contribute to the ATP site. CTP-binding residues include Gly28 and Arg31. Asp41 and Asp43 together coordinate Mg(2+). Positions 112, 155, 158, 161, and 164 each coordinate ATP. Residues Arg112, Asp155, Arg158, Arg161, and Arg164 each contribute to the CTP site.

The protein belongs to the tRNA nucleotidyltransferase/poly(A) polymerase family. Bacterial CCA-adding enzyme type 3 subfamily. As to quaternary structure, homodimer. Requires Mg(2+) as cofactor.

The catalysed reaction is a tRNA precursor + 2 CTP + ATP = a tRNA with a 3' CCA end + 3 diphosphate. It catalyses the reaction a tRNA with a 3' CCA end + 2 CTP + ATP = a tRNA with a 3' CCACCA end + 3 diphosphate. Functionally, catalyzes the addition and repair of the essential 3'-terminal CCA sequence in tRNAs without using a nucleic acid template. Adds these three nucleotides in the order of C, C, and A to the tRNA nucleotide-73, using CTP and ATP as substrates and producing inorganic pyrophosphate. tRNA 3'-terminal CCA addition is required both for tRNA processing and repair. Also involved in tRNA surveillance by mediating tandem CCA addition to generate a CCACCA at the 3' terminus of unstable tRNAs. While stable tRNAs receive only 3'-terminal CCA, unstable tRNAs are marked with CCACCA and rapidly degraded. This is CCA-adding enzyme from Staphylococcus aureus (strain Mu3 / ATCC 700698).